Reading from the N-terminus, the 185-residue chain is uncharacterized protein (185 aa).

This is an uncharacterized protein from Magallana gigas (Pacific oyster).